The sequence spans 374 residues: tRNA-specific 2-thiouridylase MnmA (374 aa).

ATP-binding positions include 13-20 (GMSGGVDS) and Met39. An interaction with target base in tRNA region spans residues 99 to 101 (NPD). Cys104 acts as the Nucleophile in catalysis. Cys104 and Cys201 form a disulfide bridge. Gly128 is a binding site for ATP. The interaction with tRNA stretch occupies residues 151 to 153 (KDQ). Residue Cys201 is the Cysteine persulfide intermediate of the active site. An interaction with tRNA region spans residues 313-314 (RY).

Belongs to the MnmA/TRMU family.

It localises to the cytoplasm. It catalyses the reaction S-sulfanyl-L-cysteinyl-[protein] + uridine(34) in tRNA + AH2 + ATP = 2-thiouridine(34) in tRNA + L-cysteinyl-[protein] + A + AMP + diphosphate + H(+). In terms of biological role, catalyzes the 2-thiolation of uridine at the wobble position (U34) of tRNA, leading to the formation of s(2)U34. The chain is tRNA-specific 2-thiouridylase MnmA from Streptococcus equi subsp. zooepidemicus (strain MGCS10565).